The chain runs to 294 residues: Phosphatidylserine decarboxylase proenzyme (294 aa).

Catalysis depends on charge relay system; for autoendoproteolytic cleavage activity residues Asp100, His157, and Ser261. Ser261 acts as the Schiff-base intermediate with substrate; via pyruvic acid; for decarboxylase activity in catalysis. Residue Ser261 is modified to Pyruvic acid (Ser); by autocatalysis.

Belongs to the phosphatidylserine decarboxylase family. PSD-B subfamily. Prokaryotic type I sub-subfamily. As to quaternary structure, heterodimer of a large membrane-associated beta subunit and a small pyruvoyl-containing alpha subunit. Pyruvate serves as cofactor. In terms of processing, is synthesized initially as an inactive proenzyme. Formation of the active enzyme involves a self-maturation process in which the active site pyruvoyl group is generated from an internal serine residue via an autocatalytic post-translational modification. Two non-identical subunits are generated from the proenzyme in this reaction, and the pyruvate is formed at the N-terminus of the alpha chain, which is derived from the carboxyl end of the proenzyme. The autoendoproteolytic cleavage occurs by a canonical serine protease mechanism, in which the side chain hydroxyl group of the serine supplies its oxygen atom to form the C-terminus of the beta chain, while the remainder of the serine residue undergoes an oxidative deamination to produce ammonia and the pyruvoyl prosthetic group on the alpha chain. During this reaction, the Ser that is part of the protease active site of the proenzyme becomes the pyruvoyl prosthetic group, which constitutes an essential element of the active site of the mature decarboxylase.

Its subcellular location is the cell membrane. The enzyme catalyses a 1,2-diacyl-sn-glycero-3-phospho-L-serine + H(+) = a 1,2-diacyl-sn-glycero-3-phosphoethanolamine + CO2. The protein operates within phospholipid metabolism; phosphatidylethanolamine biosynthesis; phosphatidylethanolamine from CDP-diacylglycerol: step 2/2. Its function is as follows. Catalyzes the formation of phosphatidylethanolamine (PtdEtn) from phosphatidylserine (PtdSer). The protein is Phosphatidylserine decarboxylase proenzyme of Mannheimia succiniciproducens (strain KCTC 0769BP / MBEL55E).